A 1196-amino-acid polypeptide reads, in one-letter code: Homeodomain-interacting protein kinase 2 (1196 aa).

Ser-16 bears the Phosphoserine mark. Lys-32 participates in a covalent cross-link: Glycyl lysine isopeptide (Lys-Gly) (interchain with G-Cter in SUMO); alternate. A Glycyl lysine isopeptide (Lys-Gly) (interchain with G-Cter in SUMO2); alternate cross-link involves residue Lys-32. A disordered region spans residues 50-69; sequence VYSQSKNIPPSQPASTTVST. Residues 97-230 form a transcriptional corepression region; it reads SASSTSVTGQ…TNEIVAIKIL (134 aa). Phosphoserine is present on residues Ser-118 and Ser-135. Thr-141 is subject to Phosphothreonine. The tract at residues 189 to 520 is interaction with DAXX; it reads HEVLCSMTNT…DADKRVTPIE (332 aa). In terms of domain architecture, Protein kinase spans 199–527; it reads YEVLEFLGRG…PIETLNHPFV (329 aa). ATP is bound by residues 205–213 and Lys-228; that span reads LGRGTFGQV. Thr-252 and Thr-273 each carry phosphothreonine. Asp-324 (proton acceptor) is an active-site residue. Phosphotyrosine; by autocatalysis is present on Tyr-361. Ser-441 carries the post-translational modification Phosphoserine. Phosphothreonine is present on residues Thr-482, Thr-517, and Thr-566. Positions 539–844 are interaction with SKI and SMAD1; it reads AHVKSCFQNM…KENTPPRCAM (306 aa). Residues 600–800 form an interaction with DAZAP2 region; the sequence is SATLSLANPE…MRQQPTSTTS (201 aa). A phosphoserine mark is found at Ser-634 and Ser-668. The residue at position 687 (Thr-687) is a Phosphothreonine. Residues 752–897 form an interaction with POU4F1 region; that stretch reads RNTHAHGSHY…ITISSDTDEE (146 aa). Positions 774 to 876 are interaction with CTBP1; it reads HVTLPAAQPL…TRERQRQTIV (103 aa). Residues 787–897 are interaction with HMGA1; it reads VAHVMRQQPT…ITISSDTDEE (111 aa). 2 disordered regions span residues 792-847 and 891-963; these read RQQP…MVHS and SSDT…CTGN. A compositionally biased stretch (polar residues) spans 793–829; it reads QQPTSTTSSRKSKQHQSSVRNVSTCEVTSSQAISSPQ. Positions 802 to 805 match the Nuclear localization signal 1 (NLS1) motif; the sequence is RKSK. 2 positions are modified to phosphoserine: Ser-815 and Ser-827. The short motif at 832 to 835 is the Nuclear localization signal 2 (NLS2) element; it reads KRVK. Positions 839-934 are interaction with TP53 and TP73; that stretch reads PPRCAMVHSS…PYSDSSSNTS (96 aa). The interval 873–907 is interaction with UBE2I; the sequence is QTIVIPDTPSPTVSVITISSDTDEEEEQKHAPTST. The segment at 873-980 is localization to nuclear speckles; sequence QTIVIPDTPS…PLKTQASEVL (108 aa). Residues 873 to 980 form a required for localization to nuclear speckles region; the sequence is QTIVIPDTPS…PLKTQASEVL (108 aa). Residues 884–908 form an SUMO interaction motifs (SIM); required for nuclear localization and kinase activity region; the sequence is TVSVITISSDTDEEEEQKHAPTSTV. Over residues 923–937 the composition is skewed to low complexity; sequence DSPYSDSSSNTSPYS. Position 934 is a phosphoserine (Ser-934). The interval 935-1050 is interaction with AXIN1; that stretch reads PYSVQQRTGH…LSQAQQHMAA (116 aa). Residues 938 to 951 show a composition bias toward polar residues; sequence VQQRTGHNGTNTLD. Glycyl lysine isopeptide (Lys-Gly) (interchain with G-Cter in SUMO2) cross-links involve residues Lys-953 and Lys-973. Positions 984–1196 are autoinhibitory domain (AID); sequence DSLGPAISAS…PAKVNQYPYI (213 aa). Residues Ser-991, Ser-993, Ser-1042, Ser-1153, and Ser-1186 each carry the phosphoserine modification. The segment covering 991-1046 has biased composition (low complexity); the sequence is SASHHSSSFKSKSSSTVTSTSGHSSGSSSGAIAYRQQRPGPHFQQQQPLNLSQAQQ. Residues 991–1058 are disordered; the sequence is SASHHSSSFK…AADRTGSHRR (68 aa). A Glycyl lysine isopeptide (Lys-Gly) (interchain with G-Cter in SUMO) cross-link involves residue Lys-1189.

Belongs to the protein kinase superfamily. CMGC Ser/Thr protein kinase family. HIPK subfamily. As to quaternary structure, interacts with CREB1, SIAH1, WSB1, CBX4, TRADD, p53/TP53, TP73, TP63, CREBBP, DAXX, P53DINP1, SKI, SMAD1, SMAD2 and SMAD3, but not SMAD4. Interacts with SP100; positively regulates TP53-dependent transcription. Interacts with ATF1, PML, RUNX1, EP300, NKX1-2, NKX2-5, UBE2I, HMGA1, CTBP1, AXIN1, NLK, MYB, POU4F1, POU4F2, POU4F3, UBE2I, UBL1 and ZBTB4. Probably part of a complex consisting of p53/TP53, HIPK2 and AXIN1. Interacts with DAZAP2; the interaction results in phosphorylation of DAZAP2 which causes localization of DAZAP2 to the nucleus, reduces interaction of DAZAP2 with HIPK2 and prevents DAZAP2-dependent degradation of HIPK2. Interacts with SIAH1; the interaction is promoted by DAZAP2 and results in SIAH1-mediated ubiquitination and subsequent proteasomal degradation of HIPK2. In terms of assembly, interacts with SPN/CD43 cytoplasmic tail. Post-translationally, sumoylated. When conjugated it is directed to nuclear speckles. Desumoylated by SENP1. Sumoylation on Lys-32 is promoted by the E3 SUMO-protein ligase CBX4. Autophosphorylation at Tyr-361 in the activation loop activates the kinase and promotes nuclear localization. In terms of processing, ubiquitinated by FBXO3, WSB1 and SIAH1, leading to rapid proteasome-dependent degradation. The degradation mediated by FBXO3, but not ubiquitination, is prevented in the presence of PML. The degradation mediated by WSB1 and SIAH1 is reversibly reduced upon DNA damage. Post-translationally, cleaved at Asp-923 and Asp-984 by CASP6 in a p53/TP53-dependent manner. The cleaved form lacks the autoinhibitory C-terminal domain (AID), resulting in a hyperactive kinase, which potentiates p53/TP53 Ser-46 phosphorylation and subsequent activation of the cell death machinery. As to expression, ubiquitous. Abundant in muscle, heart, small intestine, stomach, kidney and brain; and low in testis, skin and lung.

Its subcellular location is the nucleus. It is found in the PML body. The protein localises to the cytoplasm. The catalysed reaction is L-seryl-[protein] + ATP = O-phospho-L-seryl-[protein] + ADP + H(+). It carries out the reaction L-threonyl-[protein] + ATP = O-phospho-L-threonyl-[protein] + ADP + H(+). Functionally, serine/threonine-protein kinase involved in transcription regulation, p53/TP53-mediated cellular apoptosis and regulation of the cell cycle. Acts as a corepressor of several transcription factors, including SMAD1 and POU4F1/Brn3a and probably NK homeodomain transcription factors. Phosphorylates PDX1, ATF1, PML, p53/TP53, CREB1, CTBP1, CBX4, RUNX1, EP300, CTNNB1, HMGA1, ZBTB4 and DAZAP2. Inhibits cell growth and promotes apoptosis through the activation of p53/TP53 both at the transcription level and at the protein level (by phosphorylation and indirect acetylation). The phosphorylation of p53/TP53 may be mediated by a p53/TP53-HIPK2-AXIN1 complex. Involved in the response to hypoxia by acting as a transcriptional co-suppressor of HIF1A. Mediates transcriptional activation of TP73. In response to TGFB, cooperates with DAXX to activate JNK. Negative regulator through phosphorylation and subsequent proteasomal degradation of CTNNB1 and the antiapoptotic factor CTBP1. In the Wnt/beta-catenin signaling pathway acts as an intermediate kinase between MAP3K7/TAK1 and NLK to promote the proteasomal degradation of MYB. Phosphorylates CBX4 upon DNA damage and promotes its E3 SUMO-protein ligase activity. Activates CREB1 and ATF1 transcription factors by phosphorylation in response to genotoxic stress. In response to DNA damage, stabilizes PML by phosphorylation. PML, HIPK2 and FBXO3 may act synergically to activate p53/TP53-dependent transactivation. Promotes angiogenesis, and is involved in erythroid differentiation, especially during fetal liver erythropoiesis. Phosphorylation of RUNX1 and EP300 stimulates EP300 transcription regulation activity. Triggers ZBTB4 protein degradation in response to DNA damage. In response to DNA damage, phosphorylates DAZAP2 which localizes DAZAP2 to the nucleus, reduces interaction of DAZAP2 with HIPK2 and prevents DAZAP2-dependent ubiquitination of HIPK2 by E3 ubiquitin-protein ligase SIAH1 and subsequent proteasomal degradation. Modulates HMGA1 DNA-binding affinity. In response to high glucose, triggers phosphorylation-mediated subnuclear localization shifting of PDX1. Involved in the regulation of eye size, lens formation and retinal lamination during late embryogenesis. The protein is Homeodomain-interacting protein kinase 2 (Hipk2) of Mus musculus (Mouse).